A 358-amino-acid polypeptide reads, in one-letter code: 4-hydroxybenzoate polyprenyltransferase, mitochondrial (358 aa).

Residues 1-20 (MIIKPIASPARYFLRTPSWS) constitute a mitochondrion transit peptide. The next 7 membrane-spanning stretches (helical) occupy residues 76-96 (TGTY…AYAY), 107-127 (LALF…INDL), 154-174 (AISL…QLNP), 202-222 (VVLG…LAGE), 229-249 (VVAP…TIYA), 275-295 (VLCG…IMNG), and 336-356 (NTGY…SFIY).

It belongs to the UbiA prenyltransferase family. Mg(2+) is required as a cofactor.

Its subcellular location is the mitochondrion. The protein localises to the mitochondrion inner membrane. It carries out the reaction an all-trans-polyprenyl diphosphate + 4-hydroxybenzoate = a 4-hydroxy-3-(all-trans-polyprenyl)benzoate + diphosphate. It functions in the pathway cofactor biosynthesis; ubiquinone biosynthesis. Its function is as follows. Catalyzes the prenylation of para-hydroxybenzoate (PHB) with an all-trans polyprenyl group. Mediates the second step in the final reaction sequence of coenzyme Q (CoQ) biosynthesis, which is the condensation of the polyisoprenoid side chain with PHB, generating the first membrane-bound Q intermediate. The polypeptide is 4-hydroxybenzoate polyprenyltransferase, mitochondrial (Schizosaccharomyces pombe (strain 972 / ATCC 24843) (Fission yeast)).